The chain runs to 468 residues: MAKGSKGFIVSIMGPVVDVKFPEEELPDIYNALEVVNPQTGQKVVLEVEQLIGDGVVRTVAMDSTDGLTKGLEVVDTGAPITAPVGKEVLGRILNVIGEPVDEAGEIKAKERWPIHRPAPELVEQSTEIEILETGIKVIDLLAPFPKGGKIGFFGGAGVGKTVLVMELIRNIAIEHKGFSVFAGVGERTREGNELWLEMQESGVLGNTVLVFGQMNEPPGARFRVALTALTIAEYFRDVEGRDVLLFIDNIFRFVQAGSEVSALLGRMPSAVGYQPTLATDMGELQERITSTRRGSITSVQAIYVPADDITDPAPATTFAHLDATVVLSRRIAELGLYPAVDPLDSSSKILDPAIVGREHYEVARGVQEVLQRYKDLQDIIAILGVEELSPEDKLVVHRARRIQRFLSQPFHVAERFTGRPGRYVPIEETIRGFKEILDGKLDDVPEQAFLMAGNIDEVKERAKEMRS.

155–162 (GGAGVGKT) lines the ATP pocket.

The protein belongs to the ATPase alpha/beta chains family. In terms of assembly, F-type ATPases have 2 components, CF(1) - the catalytic core - and CF(0) - the membrane proton channel. CF(1) has five subunits: alpha(3), beta(3), gamma(1), delta(1), epsilon(1). CF(0) has three main subunits: a(1), b(2) and c(9-12). The alpha and beta chains form an alternating ring which encloses part of the gamma chain. CF(1) is attached to CF(0) by a central stalk formed by the gamma and epsilon chains, while a peripheral stalk is formed by the delta and b chains.

Its subcellular location is the cell inner membrane. The enzyme catalyses ATP + H2O + 4 H(+)(in) = ADP + phosphate + 5 H(+)(out). Its function is as follows. Produces ATP from ADP in the presence of a proton gradient across the membrane. The catalytic sites are hosted primarily by the beta subunits. The sequence is that of ATP synthase subunit beta from Thermotoga petrophila (strain ATCC BAA-488 / DSM 13995 / JCM 10881 / RKU-1).